A 263-amino-acid polypeptide reads, in one-letter code: Pimeloyl-[acyl-carrier protein] methyl ester esterase (263 aa).

Residues tryptophan 23, 90-91 (SL), and 152-156 (FLTLQ) contribute to the substrate site. Serine 90 serves as the catalytic Nucleophile. Catalysis depends on residues aspartate 216 and histidine 244. Residue histidine 244 coordinates substrate.

It belongs to the AB hydrolase superfamily. Carboxylesterase BioH family. In terms of assembly, monomer.

It is found in the cytoplasm. It catalyses the reaction 6-carboxyhexanoyl-[ACP] methyl ester + H2O = 6-carboxyhexanoyl-[ACP] + methanol + H(+). The protein operates within cofactor biosynthesis; biotin biosynthesis. Its function is as follows. The physiological role of BioH is to remove the methyl group introduced by BioC when the pimeloyl moiety is complete. It allows to synthesize pimeloyl-ACP via the fatty acid synthetic pathway through the hydrolysis of the ester bonds of pimeloyl-ACP esters. This chain is Pimeloyl-[acyl-carrier protein] methyl ester esterase, found in Nitrosospira multiformis (strain ATCC 25196 / NCIMB 11849 / C 71).